A 382-amino-acid polypeptide reads, in one-letter code: N-acetyldiaminopimelate deacetylase (382 aa).

Asp73 is a catalytic residue. Glu132 (proton acceptor) is an active-site residue.

Belongs to the peptidase M20A family. N-acetyldiaminopimelate deacetylase subfamily.

It carries out the reaction N-acetyl-(2S,6S)-2,6-diaminopimelate + H2O = (2S,6S)-2,6-diaminopimelate + acetate. Its pathway is amino-acid biosynthesis; L-lysine biosynthesis via DAP pathway; LL-2,6-diaminopimelate from (S)-tetrahydrodipicolinate (acetylase route): step 3/3. Catalyzes the conversion of N-acetyl-diaminopimelate to diaminopimelate and acetate. The chain is N-acetyldiaminopimelate deacetylase from Oenococcus oeni (strain ATCC BAA-331 / PSU-1).